Here is a 536-residue protein sequence, read N- to C-terminus: Mitogen-activated protein kinase kinase kinase mom-4 (536 aa).

Over residues 1-20 the composition is skewed to low complexity; sequence MDNSSQSKPSSSSSSHSPSP. The segment at 1–34 is disordered; that stretch reads MDNSSQSKPSSSSSSHSPSPAAITPTQRTTRDSG. A Protein kinase domain is found at 51 to 305; that stretch reads NLNSHYLGKG…SSECVEYFTL (255 aa). ATP-binding positions include 57–65 and lysine 84; that span reads LGKGTYGLV. Aspartate 176 (proton acceptor) is an active-site residue. The disordered stretch occupies residues 314 to 438; it reads SVPLSDSSTN…EHRRDSNDEE (125 aa). Polar residues-rich tracts occupy residues 315 to 325 and 350 to 366; these read VPLSDSSTNGP and NNRT…QQPG. Basic and acidic residues predominate over residues 405-438; the sequence is KNFRDRAKSEQRQPHRDARPPPPFEHRRDSNDEE.

It belongs to the protein kinase superfamily. STE Ser/Thr protein kinase family. MAP kinase kinase kinase subfamily. Interacts with, and is activated by, tap-1. Mg(2+) is required as a cofactor. In terms of processing, may be autophosphorylated.

It catalyses the reaction L-seryl-[protein] + ATP = O-phospho-L-seryl-[protein] + ADP + H(+). It carries out the reaction L-threonyl-[protein] + ATP = O-phospho-L-threonyl-[protein] + ADP + H(+). Part of the Wnt signaling pathway essential for the specification of the mesodermal cell fate in early embryos. Stimulates the wrm-1/lit-1-dependent phosphorylation of pop-1 and plays a role in the initial nuclear accumulation of wrm-1. The protein is Mitogen-activated protein kinase kinase kinase mom-4 of Caenorhabditis elegans.